Here is a 564-residue protein sequence, read N- to C-terminus: Septation ring formation regulator EzrA (564 aa).

The Extracellular portion of the chain corresponds to 1–4 (MVLY). A helical transmembrane segment spans residues 5-23 (IILAIIVIILIAVGVLFYL). The Cytoplasmic segment spans residues 24–564 (RSNKRQIIEK…KHIEEEVIKQ (541 aa)). Coiled-coil stretches lie at residues 99–138 (SFNASQSEIDDANELMDSYEQSYQQQLEDVNEIIALYKDN), 190–223 (DGNYVQAHNHIAALNEQMKQLRSYMEEIPELIRE), 271–300 (LISRLELEEANDKLANINDKLDDMYDLIEH), 350–435 (VRQF…RRLL), and 471–550 (VKQL…ESVE).

It belongs to the EzrA family.

It is found in the cell membrane. Negative regulator of FtsZ ring formation; modulates the frequency and position of FtsZ ring formation. Inhibits FtsZ ring formation at polar sites. Interacts either with FtsZ or with one of its binding partners to promote depolymerization. The protein is Septation ring formation regulator EzrA of Staphylococcus aureus (strain NCTC 8325 / PS 47).